Here is a 314-residue protein sequence, read N- to C-terminus: Pseudouridine-5'-phosphate glycosidase (314 aa).

The active-site Proton donor is Glu30. Substrate-binding residues include Lys91 and Val111. Position 143 (Asp143) interacts with Mn(2+). 145–147 (SAD) lines the substrate pocket. Lys164 (nucleophile) is an active-site residue.

This sequence belongs to the pseudouridine-5'-phosphate glycosidase family. Homotrimer. Mn(2+) serves as cofactor.

It carries out the reaction D-ribose 5-phosphate + uracil = psi-UMP + H2O. In terms of biological role, catalyzes the reversible cleavage of pseudouridine 5'-phosphate (PsiMP) to ribose 5-phosphate and uracil. Functions biologically in the cleavage direction, as part of a pseudouridine degradation pathway. The polypeptide is Pseudouridine-5'-phosphate glycosidase (Cupriavidus pinatubonensis (strain JMP 134 / LMG 1197) (Cupriavidus necator (strain JMP 134))).